The following is a 351-amino-acid chain: S-adenosylmethionine:tRNA ribosyltransferase-isomerase (351 aa).

It belongs to the QueA family. Monomer.

The protein localises to the cytoplasm. The enzyme catalyses 7-aminomethyl-7-carbaguanosine(34) in tRNA + S-adenosyl-L-methionine = epoxyqueuosine(34) in tRNA + adenine + L-methionine + 2 H(+). The protein operates within tRNA modification; tRNA-queuosine biosynthesis. Functionally, transfers and isomerizes the ribose moiety from AdoMet to the 7-aminomethyl group of 7-deazaguanine (preQ1-tRNA) to give epoxyqueuosine (oQ-tRNA). The sequence is that of S-adenosylmethionine:tRNA ribosyltransferase-isomerase from Phocaeicola vulgatus (strain ATCC 8482 / DSM 1447 / JCM 5826 / CCUG 4940 / NBRC 14291 / NCTC 11154) (Bacteroides vulgatus).